Here is a 742-residue protein sequence, read N- to C-terminus: Pyriculol/pyriculariol biosynthesis cluster transcription factor 1 (742 aa).

Residues 23 to 49 constitute a DNA-binding region (zn(2)-C6 fungal-type); sequence CVLCQHRKIKCDRSFPCANCQRANVQC. Positions 85-116 are disordered; sequence GKPDIARLTTKRSSLSQSPPKGEEPLPEWNRH. Basic and acidic residues predominate over residues 105–116; sequence KGEEPLPEWNRH.

The protein resides in the nucleus. Functionally, transcriptional regulator; part of the gene cluster that mediates the biosynthesis of pyriculol and pyriculariol, two heptaketides that induce lesion formation upon application on rice leaves but are dispensable for pathogenicity. With TRF2, negatively regulates the expression of the gene cluster and the subsequent pyriculol and pyriculariol production. The sequence is that of Pyriculol/pyriculariol biosynthesis cluster transcription factor 1 from Pyricularia oryzae (strain 70-15 / ATCC MYA-4617 / FGSC 8958) (Rice blast fungus).